The primary structure comprises 1438 residues: Membrane-anchored lipid-binding protein YSP2 (1438 aa).

Positions 1–17 (MRDEATRKKRSFSDGHF) are enriched in basic and acidic residues. Disordered stretches follow at residues 1–97 (MRDE…SHTP), 174–194 (KVKH…NERP), 200–219 (QKDD…SAPN), 285–308 (QQQH…QNPN), 338–418 (TSGP…KVKF), 455–485 (DENN…LGPK), and 505–543 (SQSN…RYSS). At 1–1277 (MRDEATRKKR…SAFSMLQQVN (1277 aa)) the chain is on the cytoplasmic side. Ser-13 carries the phosphoserine modification. Residues 18 to 29 (FKKLKLMSRKKQ) are compositionally biased toward basic residues. The segment covering 30-44 (PVMERSKTTRTRKES) has biased composition (basic and acidic residues). Low complexity predominate over residues 45–58 (TNSAAKSSLSLRRA). Polar residues predominate over residues 74-97 (IGSTNEGVAGNSGSNSPAQYSHTP). Low complexity-rich tracts occupy residues 286–298 (QQHP…GPLP) and 374–398 (PTNT…ANSN). Ser-411 carries the post-translational modification Phosphoserine. The segment covering 455–470 (DENNTNNNPNASSTNL) has biased composition (low complexity). A compositionally biased stretch (polar residues) spans 471 to 485 (SHISKSNVNNNLGPK). The residue at position 596 (Ser-596) is a Phosphoserine. In terms of domain architecture, GRAM spans 648–716 (EFHTLFKDCD…KEIVQIEKKT (69 aa)). The tract at residues 777–843 (SSSAFFDDSD…LGPNKHSPTT (67 aa)) is disordered. The segment covering 783–800 (DDSDDNDDDGDLDDDDPD) has biased composition (acidic residues). Polar residues predominate over residues 818 to 832 (NESNDLGKNQKSTNY). The VASt 1 domain occupies 851–1018 (NDHLVIEANI…EIKKILSDED (168 aa)). The residue at position 1032 (Ser-1032) is a Phosphoserine. Residues 1059 to 1225 (DDTVIDEKIN…DLKKIISNAS (167 aa)) enclose the VASt 2 domain. Positions 1225–1257 (SSTKKKSRRRGKTVNKRKSSPSTIKNEKNEENF) are disordered. Basic residues predominate over residues 1227-1243 (TKKKSRRRGKTVNKRKS). A helical transmembrane segment spans residues 1278-1298 (ITSVQGIMTIISFFICLIFFF). Over 1299-1438 (RLLFHSKNTS…DNTSATNQLL (140 aa)) the chain is Lumenal. N-linked (GlcNAc...) asparagine glycosylation is found at Asn-1306, Asn-1373, and Asn-1430.

Belongs to the YSP2 family.

It is found in the mitochondrion membrane. The protein resides in the endoplasmic reticulum membrane. Functionally, involved in induction of programmed cell death in response to reactive oxygen species (ROS). May be involved in sterol transfer between intracellular membranes. The chain is Membrane-anchored lipid-binding protein YSP2 from Saccharomyces cerevisiae (strain ATCC 204508 / S288c) (Baker's yeast).